The sequence spans 189 residues: UPF0301 protein PputGB1_5045 (189 aa).

The protein belongs to the UPF0301 (AlgH) family.

In Pseudomonas putida (strain GB-1), this protein is UPF0301 protein PputGB1_5045.